Here is a 187-residue protein sequence, read N- to C-terminus: UPF0301 protein PBPRA3139 (187 aa).

The protein belongs to the UPF0301 (AlgH) family.

This chain is UPF0301 protein PBPRA3139, found in Photobacterium profundum (strain SS9).